The chain runs to 437 residues: Glutamyl-tRNA reductase (437 aa).

Residues 49–52 (TCNR), serine 109, 114–116 (EGQ), and glutamine 120 contribute to the substrate site. The active-site Nucleophile is the cysteine 50. An NADP(+)-binding site is contributed by 198-203 (GAGRMS).

This sequence belongs to the glutamyl-tRNA reductase family. In terms of assembly, homodimer.

The enzyme catalyses (S)-4-amino-5-oxopentanoate + tRNA(Glu) + NADP(+) = L-glutamyl-tRNA(Glu) + NADPH + H(+). Its pathway is porphyrin-containing compound metabolism; protoporphyrin-IX biosynthesis; 5-aminolevulinate from L-glutamyl-tRNA(Glu): step 1/2. It participates in porphyrin-containing compound metabolism; chlorophyll biosynthesis. In terms of biological role, catalyzes the NADPH-dependent reduction of glutamyl-tRNA(Glu) to glutamate 1-semialdehyde (GSA). This chain is Glutamyl-tRNA reductase, found in Synechococcus sp. (strain CC9311).